The following is a 326-amino-acid chain: N-acetyl-gamma-glutamyl-phosphate reductase (326 aa).

Cys155 is a catalytic residue.

The protein belongs to the NAGSA dehydrogenase family. Type 1 subfamily.

It localises to the cytoplasm. It catalyses the reaction N-acetyl-L-glutamate 5-semialdehyde + phosphate + NADP(+) = N-acetyl-L-glutamyl 5-phosphate + NADPH + H(+). It functions in the pathway amino-acid biosynthesis; L-arginine biosynthesis; N(2)-acetyl-L-ornithine from L-glutamate: step 3/4. Functionally, catalyzes the NADPH-dependent reduction of N-acetyl-5-glutamyl phosphate to yield N-acetyl-L-glutamate 5-semialdehyde. This is N-acetyl-gamma-glutamyl-phosphate reductase from Shewanella woodyi (strain ATCC 51908 / MS32).